Here is a 139-residue protein sequence, read N- to C-terminus: Nucleoside diphosphate kinase (139 aa).

Lysine 11, phenylalanine 59, arginine 87, threonine 93, arginine 104, and asparagine 114 together coordinate ATP. Histidine 117 (pros-phosphohistidine intermediate) is an active-site residue.

Belongs to the NDK family. As to quaternary structure, homotetramer. Mg(2+) serves as cofactor.

The protein localises to the cytoplasm. The enzyme catalyses a 2'-deoxyribonucleoside 5'-diphosphate + ATP = a 2'-deoxyribonucleoside 5'-triphosphate + ADP. The catalysed reaction is a ribonucleoside 5'-diphosphate + ATP = a ribonucleoside 5'-triphosphate + ADP. Major role in the synthesis of nucleoside triphosphates other than ATP. The ATP gamma phosphate is transferred to the NDP beta phosphate via a ping-pong mechanism, using a phosphorylated active-site intermediate. In Flavobacterium johnsoniae (strain ATCC 17061 / DSM 2064 / JCM 8514 / BCRC 14874 / CCUG 350202 / NBRC 14942 / NCIMB 11054 / UW101) (Cytophaga johnsonae), this protein is Nucleoside diphosphate kinase.